We begin with the raw amino-acid sequence, 646 residues long: Envelope glycoprotein (646 aa).

A signal peptide spans 1 to 25 (MLSVAQSSALFLLQAICILYITKLT). Topologically, residues 26 to 119 (IPTPVSEINL…INYLLRFISA (94 aa)) are lumenal. Asn72, Asn80, and Asn101 each carry an N-linked (GlcNAc...) asparagine; by host glycan. A helical transmembrane segment spans residues 120–140 (IIVYLLLSISKQGIFLFFSIV). The Cytoplasmic portion of the chain corresponds to 141-176 (HYSFKFIKNKKSCNICGNDFYFIHIDCPKPDFTKRS). A helical membrane pass occupies residues 177-197 (DFHMMFYIILFLSLFFVVTHA). The Lumenal segment spans residues 198-588 (DDNVYNYYEH…KNLLYIDYKK (391 aa)). Asn247 and Asn336 each carry an N-linked (GlcNAc...) asparagine; by host glycan. Residues 589–609 (IIFVFLVAIISIGIFLRSPYM) traverse the membrane as a helical segment. The Cytoplasmic segment spans residues 610–646 (LLSSILKFRKRRKVVATNRSEQLVMDDDVDVFIGPPS).

G2 and G1 interact with each other. Specific enzymatic cleavages in vivo yield mature proteins including glycoprotein G1 and glycoprotein G2. In terms of processing, glycosylated. Glycosylation is essential for proper subcellular location.

Its subcellular location is the virion membrane. It localises to the host Golgi apparatus membrane. Functionally, glycoprotein G2 and glycoprotein G1 interact with each other and are present at the surface of the virion. They are able to attach the virion to a cell receptor and to promote fusion of membranes after endocytosis of the virion. This European mountain ash ringspot-associated virus (isolate Sorbus aucuparia) (EMARAV) protein is Envelope glycoprotein.